The sequence spans 263 residues: Proteasome subunit beta type-5 (263 aa).

Positions 1-59 (MALASVLERPLPVNQRGFFGLGGRADLLDLGPGSLSDGLSLAAPGWGVPEEPGIEMLHG) are cleaved as a propeptide — removed in mature form. The active-site Nucleophile is the Thr-60. Ala-108 is a bortezomib binding site.

It belongs to the peptidase T1B family. In terms of assembly, the 26S proteasome consists of a 20S proteasome core and two 19S regulatory subunits. The 20S proteasome core is a barrel-shaped complex made of 28 subunits that are arranged in four stacked rings. The two outer rings are each formed by seven alpha subunits, and the two inner rings are formed by seven beta subunits. The proteolytic activity is exerted by three beta-subunits PSMB5, PSMB6 and PSMB7. Directly interacts with POMP. Interacts with ABCB1 and TAP1. As to quaternary structure, (Microbial infection) Interacts with HIV-1 TAT protein.

The protein resides in the cytoplasm. The protein localises to the nucleus. The catalysed reaction is Cleavage of peptide bonds with very broad specificity.. Its function is as follows. Component of the 20S core proteasome complex involved in the proteolytic degradation of most intracellular proteins. This complex plays numerous essential roles within the cell by associating with different regulatory particles. Associated with two 19S regulatory particles, forms the 26S proteasome and thus participates in the ATP-dependent degradation of ubiquitinated proteins. The 26S proteasome plays a key role in the maintenance of protein homeostasis by removing misfolded or damaged proteins that could impair cellular functions, and by removing proteins whose functions are no longer required. Associated with the PA200 or PA28, the 20S proteasome mediates ubiquitin-independent protein degradation. This type of proteolysis is required in several pathways including spermatogenesis (20S-PA200 complex) or generation of a subset of MHC class I-presented antigenic peptides (20S-PA28 complex). Within the 20S core complex, PSMB5 displays a chymotrypsin-like activity. This chain is Proteasome subunit beta type-5, found in Homo sapiens (Human).